The primary structure comprises 187 residues: Large ribosomal subunit protein uL5 (187 aa).

It belongs to the universal ribosomal protein uL5 family. As to quaternary structure, part of the 50S ribosomal subunit; part of the 5S rRNA/L5/L18/L25 subcomplex. Contacts the 5S rRNA and the P site tRNA. Forms a bridge to the 30S subunit in the 70S ribosome.

This is one of the proteins that bind and probably mediate the attachment of the 5S RNA into the large ribosomal subunit, where it forms part of the central protuberance. In the 70S ribosome it contacts protein S13 of the 30S subunit (bridge B1b), connecting the 2 subunits; this bridge is implicated in subunit movement. Contacts the P site tRNA; the 5S rRNA and some of its associated proteins might help stabilize positioning of ribosome-bound tRNAs. The chain is Large ribosomal subunit protein uL5 from Saccharopolyspora erythraea (strain ATCC 11635 / DSM 40517 / JCM 4748 / NBRC 13426 / NCIMB 8594 / NRRL 2338).